We begin with the raw amino-acid sequence, 308 residues long: Cytochrome b (308 aa).

The next 4 helical transmembrane spans lie at 1–21 (FGSL…LLAM), 45–66 (WLIR…YLHI), 81–101 (WNIG…GYVL), and 146–166 (FFAF…VHLT). Heme b contacts are provided by His51 and His65. Heme b contacts are provided by His150 and His164. Residue His169 coordinates a ubiquinone. 3 helical membrane passes run 194 to 214 (IKDL…ALFS), 256 to 276 (LGGV…PLLH), and 288 to 308 (LSQI…WVGS).

This sequence belongs to the cytochrome b family. In terms of assembly, the cytochrome bc1 complex contains 11 subunits: 3 respiratory subunits (MT-CYB, CYC1 and UQCRFS1), 2 core proteins (UQCRC1 and UQCRC2) and 6 low-molecular weight proteins (UQCRH/QCR6, UQCRB/QCR7, UQCRQ/QCR8, UQCR10/QCR9, UQCR11/QCR10 and a cleavage product of UQCRFS1). This cytochrome bc1 complex then forms a dimer. Heme b serves as cofactor.

It is found in the mitochondrion inner membrane. Functionally, component of the ubiquinol-cytochrome c reductase complex (complex III or cytochrome b-c1 complex) that is part of the mitochondrial respiratory chain. The b-c1 complex mediates electron transfer from ubiquinol to cytochrome c. Contributes to the generation of a proton gradient across the mitochondrial membrane that is then used for ATP synthesis. The polypeptide is Cytochrome b (MT-CYB) (Corvus corax (Common raven)).